The sequence spans 243 residues: UDP-2,3-diacylglucosamine hydrolase (243 aa).

Mn(2+) contacts are provided by D9, H11, D42, N79, and H114. Substrate is bound at residue 79–80 (NR). Residues D122, S160, N164, and H195 each contribute to the substrate site. The Mn(2+) site is built by H195 and H197.

Belongs to the LpxH family. The cofactor is Mn(2+).

Its subcellular location is the cell inner membrane. It catalyses the reaction UDP-2-N,3-O-bis[(3R)-3-hydroxytetradecanoyl]-alpha-D-glucosamine + H2O = 2-N,3-O-bis[(3R)-3-hydroxytetradecanoyl]-alpha-D-glucosaminyl 1-phosphate + UMP + 2 H(+). It functions in the pathway glycolipid biosynthesis; lipid IV(A) biosynthesis; lipid IV(A) from (3R)-3-hydroxytetradecanoyl-[acyl-carrier-protein] and UDP-N-acetyl-alpha-D-glucosamine: step 4/6. Hydrolyzes the pyrophosphate bond of UDP-2,3-diacylglucosamine to yield 2,3-diacylglucosamine 1-phosphate (lipid X) and UMP by catalyzing the attack of water at the alpha-P atom. Involved in the biosynthesis of lipid A, a phosphorylated glycolipid that anchors the lipopolysaccharide to the outer membrane of the cell. This Coxiella burnetii (strain Dugway 5J108-111) protein is UDP-2,3-diacylglucosamine hydrolase.